The sequence spans 510 residues: MIPSYVPPKYKVEVDPNRCMLCERCTIECSWGVYRREGDRIISYSNRCGACHRCVVMCPRDAITIKENAISWRSHPLWDVDARVDIYNQAKTGCILLSGMGNAKEHPIYFDKIVLDACQVTNPSIDPLREPMELRTYIGKKPKQLEFEFVEEEIDGKKIKKAKLKTKIAPNLKLDTPIMIAHMSYGALSLNAHLSFAKAVKECGTFMGTGEGGLPKALYPYADHIITQVASGRFGVNEEYLMKGSAIEIKIGQGAKPGIGGHLPGEKVTAEISATRMIPEGSDAISPAPHHDIYSIEDLAQLVRSLKEATRWKKPVFVKIAAVHNAPAIAVGIATSDADAVVIDGYKGGTGAAPKVFRDHVGIPIEMAIAAVDQRLREEGLRNEISIIASGGIRCSADVFKAIALGADAVYIGTAAMVALGCRVCGRCYTGLCAWGIATQRPELVKRLDPEVGARRVANLIKAWTHEIKELLGAAGINSIESLRGNRDRLRGVGLNEKELEVLGIKAAGE.

4Fe-4S ferredoxin-type domains follow at residues 10-37 and 38-68; these read YKVE…YRRE and GDRI…IKEN. Residues cysteine 19, cysteine 22, cysteine 25, cysteine 29, cysteine 48, cysteine 51, cysteine 54, and cysteine 58 each contribute to the [4Fe-4S] cluster site.

Belongs to the glutamate synthase family. The cofactor is FMN.

The enzyme catalyses 2 L-glutamate + NADP(+) = L-glutamine + 2-oxoglutarate + NADPH + H(+). This Methanocaldococcus jannaschii (strain ATCC 43067 / DSM 2661 / JAL-1 / JCM 10045 / NBRC 100440) (Methanococcus jannaschii) protein is Archaeal glutamate synthase [NADPH].